The sequence spans 569 residues: 3-(3-hydroxy-phenyl)propionate/3-hydroxycinnamic acid hydroxylase (569 aa).

Residues 12 to 41 (DVVVVGAGPSGLTLANILGLQGVATLVVDE) and 277 to 287 (FRKGRLMLAGD) each bind FAD.

The protein belongs to the PheA/TfdB FAD monooxygenase family. FAD serves as cofactor.

The enzyme catalyses 3-(3-hydroxyphenyl)propanoate + NADH + O2 + H(+) = 3-(2,3-dihydroxyphenyl)propanoate + NAD(+) + H2O. It catalyses the reaction (2E)-3-(3-hydroxyphenyl)prop-2-enoate + NADH + O2 + H(+) = (2E)-3-(2,3-dihydroxyphenyl)prop-2-enoate + NAD(+) + H2O. It participates in aromatic compound metabolism; 3-phenylpropanoate degradation. In terms of biological role, catalyzes the insertion of one atom of molecular oxygen into position 2 of the phenyl ring of 3-(3-hydroxyphenyl)propionate (3-HPP) and hydroxycinnamic acid (3HCI). The sequence is that of 3-(3-hydroxy-phenyl)propionate/3-hydroxycinnamic acid hydroxylase from Mycolicibacterium vanbaalenii (strain DSM 7251 / JCM 13017 / BCRC 16820 / KCTC 9966 / NRRL B-24157 / PYR-1) (Mycobacterium vanbaalenii).